The primary structure comprises 279 residues: uncharacterized protein (279 aa).

One can recognise an HTH rpiR-type domain in the interval 1–77 (MGILEQLENP…VTLAKEISNK (77 aa)). Residues 37 to 56 (ISIIAKESGVGEATITRFTK) constitute a DNA-binding region (H-T-H motif). One can recognise an SIS domain in the interval 123–263 (CRDLIMNAKR…YTEVIKEMFS (141 aa)).

This is an uncharacterized protein from Clostridium perfringens (strain 13 / Type A).